Consider the following 90-residue polypeptide: Small ribosomal subunit protein bS20 (90 aa).

The protein belongs to the bacterial ribosomal protein bS20 family.

Binds directly to 16S ribosomal RNA. The polypeptide is Small ribosomal subunit protein bS20 (Rickettsia felis (strain ATCC VR-1525 / URRWXCal2) (Rickettsia azadi)).